Here is a 305-residue protein sequence, read N- to C-terminus: Putative lipid kinase SAR0780 (305 aa).

One can recognise a DAGKc domain in the interval 3-139; that stretch reads NKYTHGVLFY…YDVIKINNQY (137 aa). Residues S44, 74 to 80, and T101 each bind ATP; that span reads GDGTVNE. Mg(2+)-binding residues include S220, D223, and E225. E281 acts as the Proton acceptor in catalysis.

Belongs to the diacylglycerol/lipid kinase family. The cofactor is Mg(2+).

May catalyze the ATP-dependent phosphorylation of lipids other than diacylglycerol (DAG). In fact, is not able to exhibit diacylglycerol kinase activity in vitro. This Staphylococcus aureus (strain MRSA252) protein is Putative lipid kinase SAR0780.